Consider the following 397-residue polypeptide: tRNA(Met) cytidine acetate ligase (397 aa).

ATP-binding positions include 7–20, Gly101, Asn152, and Arg177; that span reads VTEYNPFHNGHIYH.

It belongs to the TmcAL family.

The protein resides in the cytoplasm. It carries out the reaction cytidine(34) in elongator tRNA(Met) + acetate + ATP = N(4)-acetylcytidine(34) in elongator tRNA(Met) + AMP + diphosphate. Catalyzes the formation of N(4)-acetylcytidine (ac(4)C) at the wobble position of elongator tRNA(Met), using acetate and ATP as substrates. First activates an acetate ion to form acetyladenylate (Ac-AMP) and then transfers the acetyl group to tRNA to form ac(4)C34. The protein is tRNA(Met) cytidine acetate ligase of Leuconostoc citreum (strain KM20).